Consider the following 713-residue polypeptide: MNSFFNSVSDFIHSVTTPDRYASQQRSSKASQSAGANSQNRPLYNNDDNQSEMYQASSSYTGGYTNSPSASSSNLAGGAAADRANPYSSRNNSTTNFSASSTSVNKAPYAPGSRSSAIGNNDPAGVTRDSHELQEYVDGQPPAPSVAMSWERIDKWADEHYPELNDQLCYPATASDLNELEADLDCSLPLDVRDSCLIHDGQEKFGRPSGIIFGITLLDLETIAEEWYSWKKAAIRINREIARATGQTPTKQGGIFINPNAGSPNSSTPGSPVASVARQKNISSWLASQDSVPEGAVQLVYAHPGWIPLANDRAGNNIAVDLAPGKKGKWGQVILFGREFDRKYVVAQSWAHFLAMVADDFDRGNWEVDHDTEELWFKTDRGTFVSYFTVLKTRVERQFRHQMQRREHERRQAAAAAQQQQQQQQHHAQGGLHSPSPQHTQSMPAPGLGKPLTSKPAQDLDIVDLNEDTATIKDKGKATMGSALRKTIVDESKTAHTIVEPLEESEEIKGKGKGKEEDVNEAAEKAKVEATEKTKKAAKEAADKEAELKKAAEKAAEEKAKAEKKAAEAREKEEKEAKAAAKAKEEELKKEEVAKAAAKAEEEQKATAAAEAAKAEAKRAAEADASKKVEAEKAAAEESKESKAESEESKVERDLEELKIDEENGNAEEADEEADDDDEDDEEEGDSKEGEETKSTTASKSKSKKKNKKKGKK.

Disordered regions lie at residues 18–129, 255–274, 400–457, and 500–713; these read PDRY…VTRD, IFINPNAGSPNSSTPGSPVA, RHQM…SKPA, and EPLE…KGKK. Low complexity predominate over residues 22-34; it reads ASQQRSSKASQSA. The segment covering 35-65 has biased composition (polar residues); it reads GANSQNRPLYNNDDNQSEMYQASSSYTGGYT. 2 stretches are compositionally biased toward low complexity: residues 66–81 and 88–103; these read NSPSASSSNLAGGAAA and SSRNNSTTNFSASSTS. Residues 260 to 270 are compositionally biased toward polar residues; the sequence is NAGSPNSSTPG. Residues 400–412 are compositionally biased toward basic and acidic residues; the sequence is RHQMQRREHERRQ. Residues 413–429 are compositionally biased toward low complexity; sequence AAAAAQQQQQQQQHHAQ. Composition is skewed to basic and acidic residues over residues 507–605 and 613–662; these read EIKG…EEQK and AKAE…KIDE. A compositionally biased stretch (acidic residues) spans 663–686; sequence ENGNAEEADEEADDDDEDDEEEGD. Over residues 701–713 the composition is skewed to basic residues; the sequence is SKSKKKNKKKGKK.

Belongs to the KNR4/SMI1 family.

This is KNR4/SMI1 homolog from Yarrowia lipolytica (strain CLIB 122 / E 150) (Yeast).